Consider the following 441-residue polypeptide: Zinc finger and BTB domain-containing protein 8A (441 aa).

The BTB domain occupies Cys-24–Gly-92. 2 stretches are compositionally biased toward polar residues: residues Glu-146–Gln-170 and Lys-178–Leu-197. Residues Glu-146–Glu-252 are disordered. A phosphoserine mark is found at Ser-161 and Ser-167. Glycyl lysine isopeptide (Lys-Gly) (interchain with G-Cter in SUMO2) cross-links involve residues Lys-178, Lys-182, and Lys-199. Positions Thr-198–Lys-208 are enriched in basic and acidic residues. Residues Ser-234–Gln-248 are compositionally biased toward low complexity. 2 C2H2-type zinc fingers span residues Phe-282–His-304 and Tyr-310–His-333. Residue Lys-437 forms a Glycyl lysine isopeptide (Lys-Gly) (interchain with G-Cter in SUMO2) linkage.

It localises to the nucleus. Its function is as follows. May be involved in transcriptional regulation. In Bos taurus (Bovine), this protein is Zinc finger and BTB domain-containing protein 8A (ZBTB8A).